Here is a 512-residue protein sequence, read N- to C-terminus: MIKDMIDSIEQFAQTQADFPVYDCLGEHRTYGQLKRDSDSIAAFIDSLALLAKSPVLVFGAQTYDMLATFVALTKSGHAYIPVDVHSAPERILAIIEIAKPSLIIAIEEFPLTIEGISLVSLSEIESAKLAEMPYERTHSVKGDDNYYIIFTSGTTGQPKGVQISHDNLLSFTNWMIEDAAFDVPKQPQMLAQPPYSFDLSVMYWAPTLALGGTLFALPKELVADFKQLFTTIAQLPVGIWTSTPSFADMAMLSDDFCQAKMPALTHFYFDGEELTVSTARKLFERFPSAKIINAYGPTEATVALSAIEITREMVDNYTRLPIGYPKPDSPTYIIDEDGKELASGEQGEIIVTGPAVSKGYLNNPEKTAEAFFTFKGQPAYHTGDIGSLTEDNILLYGGRLDFQIKYAGYRIELEDVSQQLNQSPMVASAVAVPRYNKEHKVQNLLAYIVVKDGVKERFDRELELTKAIKASVKDHMMSYMMPSKFLYRDSLPLTPNGKIDIKTLINEVNNR.

An ATP-binding site is contributed by 152–153; it reads TS. Position 199 (Asp-199) interacts with D-alanine. ATP is bound at residue 294–299; it reads NAYGPT. Val-303 lines the D-alanine pocket. Residues Asp-385, 397-400, and Lys-499 contribute to the ATP site; that span reads YGGR. Lys-499 provides a ligand contact to D-alanine.

Belongs to the ATP-dependent AMP-binding enzyme family. DltA subfamily.

It is found in the cytoplasm. The enzyme catalyses holo-[D-alanyl-carrier protein] + D-alanine + ATP = D-alanyl-[D-alanyl-carrier protein] + AMP + diphosphate. Its pathway is cell wall biogenesis; lipoteichoic acid biosynthesis. Catalyzes the first step in the D-alanylation of lipoteichoic acid (LTA), the activation of D-alanine and its transfer onto the D-alanyl carrier protein (Dcp) DltC. In an ATP-dependent two-step reaction, forms a high energy D-alanyl-AMP intermediate, followed by transfer of the D-alanyl residue as a thiol ester to the phosphopantheinyl prosthetic group of the Dcp. D-alanylation of LTA plays an important role in modulating the properties of the cell wall in Gram-positive bacteria, influencing the net charge of the cell wall. In Streptococcus pyogenes serotype M28 (strain MGAS6180), this protein is D-alanine--D-alanyl carrier protein ligase.